The primary structure comprises 136 residues: ATP synthase epsilon chain (136 aa).

The protein belongs to the ATPase epsilon chain family. F-type ATPases have 2 components, CF(1) - the catalytic core - and CF(0) - the membrane proton channel. CF(1) has five subunits: alpha(3), beta(3), gamma(1), delta(1), epsilon(1). CF(0) has three main subunits: a, b and c.

It is found in the cell inner membrane. In terms of biological role, produces ATP from ADP in the presence of a proton gradient across the membrane. This Agrobacterium fabrum (strain C58 / ATCC 33970) (Agrobacterium tumefaciens (strain C58)) protein is ATP synthase epsilon chain.